The primary structure comprises 297 residues: Large ribosomal subunit protein uL18 (297 aa).

It belongs to the universal ribosomal protein uL18 family. As to quaternary structure, component of the large ribosomal subunit (LSU).

The protein localises to the cytoplasm. It is found in the nucleus. Its function is as follows. Component of the ribosome, a large ribonucleoprotein complex responsible for the synthesis of proteins in the cell. The small ribosomal subunit (SSU) binds messenger RNAs (mRNAs) and translates the encoded message by selecting cognate aminoacyl-transfer RNA (tRNA) molecules. The large subunit (LSU) contains the ribosomal catalytic site termed the peptidyl transferase center (PTC), which catalyzes the formation of peptide bonds, thereby polymerizing the amino acids delivered by tRNAs into a polypeptide chain. The nascent polypeptides leave the ribosome through a tunnel in the LSU and interact with protein factors that function in enzymatic processing, targeting, and the membrane insertion of nascent chains at the exit of the ribosomal tunnel. This is Large ribosomal subunit protein uL18 (RpL5) from Lysiphlebus testaceipes (Greenbugs aphid parastoid).